The chain runs to 320 residues: Malate dehydrogenase (320 aa).

NAD(+) is bound by residues 10–15 (GSGMIG) and D34. 2 residues coordinate substrate: R83 and R89. NAD(+)-binding positions include N96 and 119–121 (ITN). Residues N121 and R152 each coordinate substrate. The active-site Proton acceptor is the H176.

Belongs to the LDH/MDH superfamily. MDH type 3 family.

It catalyses the reaction (S)-malate + NAD(+) = oxaloacetate + NADH + H(+). Its function is as follows. Catalyzes the reversible oxidation of malate to oxaloacetate. The protein is Malate dehydrogenase of Bartonella henselae (strain ATCC 49882 / DSM 28221 / CCUG 30454 / Houston 1) (Rochalimaea henselae).